The sequence spans 418 residues: Gamma-glutamyl phosphate reductase (418 aa).

The protein belongs to the gamma-glutamyl phosphate reductase family.

The protein localises to the cytoplasm. It carries out the reaction L-glutamate 5-semialdehyde + phosphate + NADP(+) = L-glutamyl 5-phosphate + NADPH + H(+). It participates in amino-acid biosynthesis; L-proline biosynthesis; L-glutamate 5-semialdehyde from L-glutamate: step 2/2. In terms of biological role, catalyzes the NADPH-dependent reduction of L-glutamate 5-phosphate into L-glutamate 5-semialdehyde and phosphate. The product spontaneously undergoes cyclization to form 1-pyrroline-5-carboxylate. This chain is Gamma-glutamyl phosphate reductase, found in Photobacterium profundum (strain SS9).